The chain runs to 434 residues: Trigger factor (434 aa).

Positions Gly-160–Pro-245 constitute a PPIase FKBP-type domain.

It belongs to the FKBP-type PPIase family. Tig subfamily.

The protein resides in the cytoplasm. The enzyme catalyses [protein]-peptidylproline (omega=180) = [protein]-peptidylproline (omega=0). In terms of biological role, involved in protein export. Acts as a chaperone by maintaining the newly synthesized protein in an open conformation. Functions as a peptidyl-prolyl cis-trans isomerase. This chain is Trigger factor, found in Shewanella halifaxensis (strain HAW-EB4).